A 427-amino-acid chain; its full sequence is Enolase (427 aa).

Position 163 (Gln163) interacts with (2R)-2-phosphoglycerate. Glu205 serves as the catalytic Proton donor. Residues Asp242, Glu285, and Asp312 each contribute to the Mg(2+) site. Lys337, Arg366, Ser367, and Lys388 together coordinate (2R)-2-phosphoglycerate. Lys337 acts as the Proton acceptor in catalysis.

Belongs to the enolase family. Requires Mg(2+) as cofactor.

It localises to the cytoplasm. The protein resides in the secreted. Its subcellular location is the cell surface. It carries out the reaction (2R)-2-phosphoglycerate = phosphoenolpyruvate + H2O. It participates in carbohydrate degradation; glycolysis; pyruvate from D-glyceraldehyde 3-phosphate: step 4/5. Its function is as follows. Catalyzes the reversible conversion of 2-phosphoglycerate (2-PG) into phosphoenolpyruvate (PEP). It is essential for the degradation of carbohydrates via glycolysis. The protein is Enolase of Methylocella silvestris (strain DSM 15510 / CIP 108128 / LMG 27833 / NCIMB 13906 / BL2).